We begin with the raw amino-acid sequence, 217 residues long: Ribosome maturation factor RimP (217 aa).

The protein belongs to the RimP family.

Its subcellular location is the cytoplasm. Functionally, required for maturation of 30S ribosomal subunits. The sequence is that of Ribosome maturation factor RimP from Nocardia farcinica (strain IFM 10152).